The primary structure comprises 28 residues: Aspartate aminotransferase, mitochondrial (28 aa).

It belongs to the class-I pyridoxal-phosphate-dependent aminotransferase family. In terms of assembly, homodimer. It depends on pyridoxal 5'-phosphate as a cofactor.

The protein resides in the mitochondrion matrix. It carries out the reaction L-aspartate + 2-oxoglutarate = oxaloacetate + L-glutamate. In terms of biological role, plays a key role in amino acid metabolism. Important for metabolite exchange between mitochondria and cytosol. The chain is Aspartate aminotransferase, mitochondrial from Catharanthus roseus (Madagascar periwinkle).